A 582-amino-acid polypeptide reads, in one-letter code: Peptidyl-prolyl cis-trans isomerase FKBP10 (582 aa).

The N-terminal stretch at 1–26 (MFPAGPPSHSLLRLPLLQLLLLVVQA) is a signal peptide. PPIase FKBP-type domains follow at residues 62–150 (GDFV…LDVW), 174–262 (GDFV…IDVH), and 286–374 (GDFM…IDFH). 7 N-linked (GlcNAc...) asparagine glycosylation sites follow: asparagine 70, asparagine 182, asparagine 294, asparagine 310, asparagine 352, asparagine 393, and asparagine 407. The PPIase FKBP-type 4 domain maps to 399 to 486 (GDFVRYHYNC…LFEVELVSRE (88 aa)). 2 consecutive EF-hand domains span residues 497 to 532 (WHKDPPANLFEDMDLNKDGEVPPEEFSTFIKAQVSE) and 542 to 577 (DPEKTIGDMFQNQDRNQDGKITVDELKLKSDEDEER). Residues aspartate 510, asparagine 512, aspartate 514, glutamate 516, glutamate 521, aspartate 555, asparagine 557, aspartate 559, lysine 561, and glutamate 566 each coordinate Ca(2+). Residues 533–582 (GKGRLMPGQDPEKTIGDMFQNQDRNQDGKITVDELKLKSDEDEERVHEEL) form a disordered region. Over residues 556–582 (RNQDGKITVDELKLKSDEDEERVHEEL) the composition is skewed to basic and acidic residues. The Prevents secretion from ER signature appears at 579-582 (HEEL).

Glycosylated and phosphorylated.

The protein resides in the endoplasmic reticulum lumen. It catalyses the reaction [protein]-peptidylproline (omega=180) = [protein]-peptidylproline (omega=0). With respect to regulation, inhibited by both FK506 and rapamycin, but not by cyclosporin A. In terms of biological role, PPIases accelerate the folding of proteins during protein synthesis. The protein is Peptidyl-prolyl cis-trans isomerase FKBP10 (FKBP10) of Homo sapiens (Human).